Reading from the N-terminus, the 417-residue chain is Serine hydroxymethyltransferase (417 aa).

Residues Leu112 and 116–118 (GHL) contribute to the (6S)-5,6,7,8-tetrahydrofolate site. Lys221 carries the post-translational modification N6-(pyridoxal phosphate)lysine. Residue Glu247 coordinates (6S)-5,6,7,8-tetrahydrofolate.

The protein belongs to the SHMT family. In terms of assembly, homodimer. Requires pyridoxal 5'-phosphate as cofactor.

It is found in the cytoplasm. The enzyme catalyses (6R)-5,10-methylene-5,6,7,8-tetrahydrofolate + glycine + H2O = (6S)-5,6,7,8-tetrahydrofolate + L-serine. It functions in the pathway one-carbon metabolism; tetrahydrofolate interconversion. Its pathway is amino-acid biosynthesis; glycine biosynthesis; glycine from L-serine: step 1/1. Functionally, catalyzes the reversible interconversion of serine and glycine with tetrahydrofolate (THF) serving as the one-carbon carrier. This reaction serves as the major source of one-carbon groups required for the biosynthesis of purines, thymidylate, methionine, and other important biomolecules. Also exhibits THF-independent aldolase activity toward beta-hydroxyamino acids, producing glycine and aldehydes, via a retro-aldol mechanism. The sequence is that of Serine hydroxymethyltransferase from Borrelia turicatae (strain 91E135).